A 499-amino-acid polypeptide reads, in one-letter code: Glycerol kinase (499 aa).

T12 provides a ligand contact to ADP. ATP-binding residues include T12, T13, and S14. T12 serves as a coordination point for sn-glycerol 3-phosphate. R16 provides a ligand contact to ADP. Residues R82, E83, Y135, and D245 each contribute to the sn-glycerol 3-phosphate site. Residues R82, E83, Y135, D245, and Q246 each coordinate glycerol. Positions 267 and 310 each coordinate ADP. Residues T267, G310, Q314, and G411 each coordinate ATP. 2 residues coordinate ADP: G411 and N415.

Belongs to the FGGY kinase family. In terms of assembly, homotetramer and homodimer (in equilibrium).

It catalyses the reaction glycerol + ATP = sn-glycerol 3-phosphate + ADP + H(+). The protein operates within polyol metabolism; glycerol degradation via glycerol kinase pathway; sn-glycerol 3-phosphate from glycerol: step 1/1. Its activity is regulated as follows. Activated by phosphorylation and inhibited by fructose 1,6-bisphosphate (FBP). Functionally, key enzyme in the regulation of glycerol uptake and metabolism. Catalyzes the phosphorylation of glycerol to yield sn-glycerol 3-phosphate. The chain is Glycerol kinase from Clostridium beijerinckii (strain ATCC 51743 / NCIMB 8052) (Clostridium acetobutylicum).